We begin with the raw amino-acid sequence, 121 residues long: uncharacterized protein (121 aa).

Disordered stretches follow at residues 38–76 (NQMA…KYQQ) and 91–121 (SVLR…KQEN). Residues 43–63 (KRNKQSKKPKQTSKGVKKSSK) show a composition bias toward basic residues. Positions 64 to 76 (QNKNSSKNNKYQQ) are enriched in low complexity.

This is an uncharacterized protein from Schizosaccharomyces pombe (strain 972 / ATCC 24843) (Fission yeast).